Here is a 327-residue protein sequence, read N- to C-terminus: Malate dehydrogenase (327 aa).

An NAD(+)-binding site is contributed by 11 to 17 (GAAGQIA). Substrate-binding residues include Arg92 and Arg98. NAD(+) contacts are provided by residues Asn105, Gln112, and 128–130 (VGN). Residues Asn130 and Arg160 each contribute to the substrate site. His185 (proton acceptor) is an active-site residue.

It belongs to the LDH/MDH superfamily. MDH type 2 family.

It carries out the reaction (S)-malate + NAD(+) = oxaloacetate + NADH + H(+). Its function is as follows. Catalyzes the reversible oxidation of malate to oxaloacetate. This chain is Malate dehydrogenase, found in Magnetococcus marinus (strain ATCC BAA-1437 / JCM 17883 / MC-1).